Reading from the N-terminus, the 122-residue chain is Large ribosomal subunit protein uL18 (122 aa).

The protein belongs to the universal ribosomal protein uL18 family. As to quaternary structure, part of the 50S ribosomal subunit; part of the 5S rRNA/L5/L18/L25 subcomplex. Contacts the 5S and 23S rRNAs.

This is one of the proteins that bind and probably mediate the attachment of the 5S RNA into the large ribosomal subunit, where it forms part of the central protuberance. The chain is Large ribosomal subunit protein uL18 from Geotalea uraniireducens (strain Rf4) (Geobacter uraniireducens).